Here is a 223-residue protein sequence, read N- to C-terminus: Ribose-5-phosphate isomerase A (223 aa).

Residues 32–35 (TGST), 83–86 (DGAD), and 96–99 (KGGG) each bind substrate. Glu105 (proton acceptor) is an active-site residue. Lys123 contacts substrate.

Belongs to the ribose 5-phosphate isomerase family. As to quaternary structure, homodimer.

The catalysed reaction is aldehydo-D-ribose 5-phosphate = D-ribulose 5-phosphate. The protein operates within carbohydrate degradation; pentose phosphate pathway; D-ribose 5-phosphate from D-ribulose 5-phosphate (non-oxidative stage): step 1/1. In terms of biological role, catalyzes the reversible conversion of ribose-5-phosphate to ribulose 5-phosphate. This is Ribose-5-phosphate isomerase A from Acinetobacter baumannii (strain ATCC 17978 / DSM 105126 / CIP 53.77 / LMG 1025 / NCDC KC755 / 5377).